A 204-amino-acid chain; its full sequence is Urease accessory protein UreG (204 aa).

Position 11–18 (11–18) interacts with GTP; it reads GPVGAGKT.

It belongs to the SIMIBI class G3E GTPase family. UreG subfamily. As to quaternary structure, homodimer. UreD, UreF and UreG form a complex that acts as a GTP-hydrolysis-dependent molecular chaperone, activating the urease apoprotein by helping to assemble the nickel containing metallocenter of UreC. The UreE protein probably delivers the nickel.

The protein resides in the cytoplasm. Functionally, facilitates the functional incorporation of the urease nickel metallocenter. This process requires GTP hydrolysis, probably effectuated by UreG. This is Urease accessory protein UreG from Staphylococcus epidermidis (strain ATCC 35984 / DSM 28319 / BCRC 17069 / CCUG 31568 / BM 3577 / RP62A).